Consider the following 81-residue polypeptide: X antigen family member 1 (81 aa).

A Glycyl lysine isopeptide (Lys-Gly) (interchain with G-Cter in SUMO2) cross-link involves residue K12. S20 carries the post-translational modification Phosphoserine. Residues K61 and K65 each participate in a glycyl lysine isopeptide (Lys-Gly) (interchain with G-Cter in SUMO2) cross-link.

The protein belongs to the GAGE family. As to expression, in normal tissues, highly expressed in testis. Expressed also in many different types of cancers: highly expressed in breast cancer, prostate cancer and many types of lung cancers, including squamous cell carcinoma, small cell carcinoma, non-small cell carcinoma, and adenocarcinoma, as well as in Ewing's cell lines, in some Ewing's sarcoma patient samples, and in one of one alveolar rhabdomyosarcoma patient sample.

The sequence is that of X antigen family member 1 from Homo sapiens (Human).